Reading from the N-terminus, the 242-residue chain is UPF0246 protein SPD_1378 (242 aa).

Belongs to the UPF0246 family.

In Streptococcus pneumoniae serotype 2 (strain D39 / NCTC 7466), this protein is UPF0246 protein SPD_1378.